The following is a 381-amino-acid chain: DNA primase DnaG (381 aa).

Residues 173 to 259 (DAILVVEGRS…EVEDLEKDEI (87 aa)) enclose the Toprim domain. 3 residues coordinate Mg(2+): Glu179, Asp221, and Asp223.

This sequence belongs to the archaeal DnaG primase family. In terms of assembly, forms a ternary complex with MCM helicase and DNA. Component of the archaeal exosome complex. Requires Mg(2+) as cofactor.

The enzyme catalyses ssDNA + n NTP = ssDNA/pppN(pN)n-1 hybrid + (n-1) diphosphate.. RNA polymerase that catalyzes the synthesis of short RNA molecules used as primers for DNA polymerase during DNA replication. Also part of the exosome, which is a complex involved in RNA degradation. Acts as a poly(A)-binding protein that enhances the interaction between heteromeric, adenine-rich transcripts and the exosome. This chain is DNA primase DnaG, found in Methanothermobacter thermautotrophicus (strain ATCC 29096 / DSM 1053 / JCM 10044 / NBRC 100330 / Delta H) (Methanobacterium thermoautotrophicum).